The following is a 546-amino-acid chain: Chaperonin GroEL (546 aa).

Residues 29-32, Lys-50, 86-90, Gly-414, and Asp-495 contribute to the ATP site; these read TLGP and DGTTT. Positions 526-546 are disordered; sequence AKEGAPAGGGMPDMGGMGGMM. The segment covering 531-546 has biased composition (gly residues); that stretch reads PAGGGMPDMGGMGGMM.

It belongs to the chaperonin (HSP60) family. Forms a cylinder of 14 subunits composed of two heptameric rings stacked back-to-back. Interacts with the co-chaperonin GroES.

The protein resides in the cytoplasm. It catalyses the reaction ATP + H2O + a folded polypeptide = ADP + phosphate + an unfolded polypeptide.. Together with its co-chaperonin GroES, plays an essential role in assisting protein folding. The GroEL-GroES system forms a nano-cage that allows encapsulation of the non-native substrate proteins and provides a physical environment optimized to promote and accelerate protein folding. The protein is Chaperonin GroEL of Jannaschia sp. (strain CCS1).